The following is a 176-amino-acid chain: Corrinoid adenosyltransferase (176 aa).

Residues 6–14, Lys24, 131–136, and Asn155 contribute to the ATP site; these read TRTGDNGTT and RRLERI.

The protein belongs to the Cob(I)alamin adenosyltransferase family.

The protein resides in the cytoplasm. It carries out the reaction 2 cob(II)yrinate a,c diamide + reduced [electron-transfer flavoprotein] + 2 ATP = 2 adenosylcob(III)yrinate a,c-diamide + 2 triphosphate + oxidized [electron-transfer flavoprotein] + 3 H(+). The enzyme catalyses 2 cob(II)alamin + reduced [electron-transfer flavoprotein] + 2 ATP = 2 adenosylcob(III)alamin + 2 triphosphate + oxidized [electron-transfer flavoprotein] + 3 H(+). It participates in cofactor biosynthesis; adenosylcobalamin biosynthesis; adenosylcobalamin from cob(II)yrinate a,c-diamide: step 2/7. The chain is Corrinoid adenosyltransferase from Citrobacter freundii.